The following is a 527-amino-acid chain: Transcription initiation factor TFIID subunit 6b (527 aa).

In terms of domain architecture, Histone-fold spans 3-99 (TKESIEVIAQ…NLEPTSGSKS (97 aa)). 2 disordered regions span residues 410-442 (SPPTSSVWKTNGKLTSPRQSKRKASSDNLTHQP) and 462-492 (MRGTTTVPQQSHTDADARHHNSPSTIAPKTS). Composition is skewed to polar residues over residues 416 to 427 (VWKTNGKLTSPR) and 462 to 473 (MRGTTTVPQQSH).

This sequence belongs to the TAF6 family. Component of the TFIID complex. TFIID is composed of TATA binding protein (TBP) and a number of TBP-associated factors (TAFs) whose MWs range from 14-217 kDa. Interacts with TAF5 and TAF9. As to expression, expressed in roots, leaves, inflorescences and siliques.

It localises to the nucleus. TAFs are components of the transcription factor IID (TFIID) complex that is essential for mediating regulation of RNA polymerase transcription. Not redundant with TAF6. This Arabidopsis thaliana (Mouse-ear cress) protein is Transcription initiation factor TFIID subunit 6b (TAF6B).